The primary structure comprises 544 residues: Protein angel homolog 2 (544 aa).

This sequence belongs to the CCR4/nocturin family.

The protein is Protein angel homolog 2 (ANGEL2) of Bos taurus (Bovine).